Reading from the N-terminus, the 707-residue chain is SPX domain-containing membrane protein At4g11810 (707 aa).

Residues 2–145 (VAFGKKLKER…GYRFTNYYVK (144 aa)) enclose the SPX domain. The next 6 helical transmembrane spans lie at 252–272 (FMSLLLNLANTFLYMVNTYII), 283–303 (LGAAATVCGVVIGAMAVAQLF), 320–340 (LIFSSIVLFFGNLLYALAYDF), 342–361 (SLALLLIGRLFCGFGSARAV), 380–400 (AGFVSASALGMACGPALAGLL), and 416–436 (LPGWVMAVAWLLYLVWLAISF). The segment covering 481-498 (EETEHDEEDDGDGSEESS) has biased composition (acidic residues). The segment at 481-503 (EETEHDEEDDGDGSEESSDDSRK) is disordered. Transmembrane regions (helical) follow at residues 523–543 (LLIYFMLKYAMEILLSESSVV), 557–577 (IFLFCLGLTVLPVNLVVGSYI), 586–606 (ILLASEIMVCIGIVLSFHVVI), 614–634 (VISGFIMFVSAEVLEGVNLSL), and 679–699 (MLLNVTLLPSLIICVLSILAT).

This sequence belongs to the major facilitator superfamily.

The protein resides in the membrane. This is SPX domain-containing membrane protein At4g11810 from Arabidopsis thaliana (Mouse-ear cress).